The sequence spans 336 residues: GTPase Obg (336 aa).

The Obg domain occupies 1 to 159; it reads MKFLDETKVY…KTIWLRLKLI (159 aa). Positions 160–327 constitute an OBG-type G domain; the sequence is ADAGLVGLPN…TLRALRSVID (168 aa). GTP is bound by residues 166–173, 191–195, 212–215, 279–282, and 308–310; these read GLPNAGKS, FTTLH, DIPG, SQID, and SAV. The Mg(2+) site is built by Ser173 and Thr193.

The protein belongs to the TRAFAC class OBG-HflX-like GTPase superfamily. OBG GTPase family. As to quaternary structure, monomer. Mg(2+) serves as cofactor.

It is found in the cytoplasm. An essential GTPase which binds GTP, GDP and possibly (p)ppGpp with moderate affinity, with high nucleotide exchange rates and a fairly low GTP hydrolysis rate. Plays a role in control of the cell cycle, stress response, ribosome biogenesis and in those bacteria that undergo differentiation, in morphogenesis control. The protein is GTPase Obg of Sinorhizobium medicae (strain WSM419) (Ensifer medicae).